Reading from the N-terminus, the 220-residue chain is Translin-1 (220 aa).

The protein belongs to the translin family. Forms an octameric ring-shaped structure, which is capable of binding DNA or RNA.

The protein resides in the cytoplasm. It localises to the nucleus. Functionally, DNA-binding protein that specifically recognizes consensus sequences at the breakpoint junctions in chromosomal translocations. Selectively binds single-stranded d(GT)n and d(GTT)n microsatellite repeats. Has much higher affinities for the homologous RNA sequences (GU)n and (GUU)n. Does not bind double-stranded DNA. Has a role in meiosis. The chain is Translin-1 (tsn1) from Schizosaccharomyces pombe (strain 972 / ATCC 24843) (Fission yeast).